Here is a 184-residue protein sequence, read N- to C-terminus: Large ribosomal subunit protein uL6 (184 aa).

This sequence belongs to the universal ribosomal protein uL6 family. Part of the 50S ribosomal subunit.

Functionally, this protein binds to the 23S rRNA, and is important in its secondary structure. It is located near the subunit interface in the base of the L7/L12 stalk, and near the tRNA binding site of the peptidyltransferase center. This chain is Large ribosomal subunit protein uL6, found in Mycoplasma pneumoniae (strain ATCC 29342 / M129 / Subtype 1) (Mycoplasmoides pneumoniae).